The sequence spans 1524 residues: DNA polymerase alpha catalytic subunit (1524 aa).

Disordered stretches follow at residues methionine 1 to isoleucine 53 and arginine 68 to proline 139. The span at serine 20–lysine 30 shows a compositional bias: basic and acidic residues. Positions glutamate 79–aspartate 96 are enriched in acidic residues. Zn(2+)-binding residues include cysteine 1333, cysteine 1336, cysteine 1375, cysteine 1378, cysteine 1414, cysteine 1419, cysteine 1440, and cysteine 1446. The segment at cysteine 1333 to cysteine 1378 adopts a CysA-type zinc-finger fold. Positions cysteine 1414–cysteine 1446 match the CysB motif motif.

The protein belongs to the DNA polymerase type-B family.

It is found in the nucleus. It catalyses the reaction DNA(n) + a 2'-deoxyribonucleoside 5'-triphosphate = DNA(n+1) + diphosphate. Functionally, polymerase alpha in a complex with DNA primase is a replicative polymerase. The chain is DNA polymerase alpha catalytic subunit (POLA) from Arabidopsis thaliana (Mouse-ear cress).